Consider the following 311-residue polypeptide: MKRYIEICKPLWTLLPEGTIHEDERLCKHTYTQMGGAADLFITPQSYEETQTVLKFAHEHRVPVTLLGNGSNVIVKDGGIRGITLSLKKLNTITCTGVELVAQTGATIIEASRRARDAELTGLEFACGIPGTVGGAFYMNAGAYGGQIADVLESVLVLTEQGEFKTLSKEEFDFDYRKSVFSAKRYIALEGTFRLQKGDMAQIQAKMDELTIARETKQPLEYPSCGSVFKRPPGMFAGKLIQDSGLQGTRIGGAEVSKKHAGFIVNVDNATATEYMSLVRHVQQTVKDKFGVELETEVITIGEDIEEPVSD.

Residues 34–198 (MGGAADLFIT…LEGTFRLQKG (165 aa)) form the FAD-binding PCMH-type domain. Arg177 is a catalytic residue. Residue Ser227 is the Proton donor of the active site. Glu297 is a catalytic residue.

The protein belongs to the MurB family. Requires FAD as cofactor.

The protein localises to the cytoplasm. The catalysed reaction is UDP-N-acetyl-alpha-D-muramate + NADP(+) = UDP-N-acetyl-3-O-(1-carboxyvinyl)-alpha-D-glucosamine + NADPH + H(+). It participates in cell wall biogenesis; peptidoglycan biosynthesis. In terms of biological role, cell wall formation. The polypeptide is UDP-N-acetylenolpyruvoylglucosamine reductase (Shouchella clausii (strain KSM-K16) (Alkalihalobacillus clausii)).